Reading from the N-terminus, the 187-residue chain is Interferon alpha-3 (187 aa).

A signal peptide spans 1–23 (MALPCSFSVALVLLSCHSLCCLA). 2 disulfides stabilise this stretch: Cys-24/Cys-122 and Cys-52/Cys-160. Residues Asn-94 and Asn-101 are each glycosylated (N-linked (GlcNAc...) asparagine).

This sequence belongs to the alpha/beta interferon family.

Its subcellular location is the secreted. Produced by macrophages, IFN-alpha have antiviral activities. Interferon stimulates the production of two enzymes: a protein kinase and an oligoadenylate synthetase. The polypeptide is Interferon alpha-3 (Canis lupus familiaris (Dog)).